Reading from the N-terminus, the 125-residue chain is Small ribosomal subunit protein eS8 (125 aa).

It belongs to the eukaryotic ribosomal protein eS8 family. Part of the 30S ribosomal subunit.

The sequence is that of Small ribosomal subunit protein eS8 from Methanosarcina acetivorans (strain ATCC 35395 / DSM 2834 / JCM 12185 / C2A).